A 429-amino-acid polypeptide reads, in one-letter code: Cell cycle protein kinase spo4 (429 aa).

A Protein kinase domain is found at 40-402 (YHVVKLVGAG…KAKTALQHEF (363 aa)). Residues 46–54 (VGAGSFSSV) and K95 contribute to the ATP site. D182 serves as the catalytic Proton acceptor. T264 carries the post-translational modification Phosphothreonine.

The protein belongs to the protein kinase superfamily. Ser/Thr protein kinase family. CDC7 subfamily. In terms of assembly, interacts with spo6.

The protein resides in the nucleus. The enzyme catalyses L-seryl-[protein] + ATP = O-phospho-L-seryl-[protein] + ADP + H(+). It catalyses the reaction L-threonyl-[protein] + ATP = O-phospho-L-threonyl-[protein] + ADP + H(+). Its function is as follows. Required for the initiation of meiosis II and progression through anaphase II. This Schizosaccharomyces pombe (strain 972 / ATCC 24843) (Fission yeast) protein is Cell cycle protein kinase spo4 (spo4).